The chain runs to 329 residues: Peroxidase 5 (329 aa).

A signal peptide spans 1–26 (MSSKRVTWLSLTWVLVFLCLSVELEA). At glutamine 27 the chain carries Pyrrolidone carboxylic acid. 4 cysteine pairs are disulfide-bonded: cysteine 37–cysteine 117, cysteine 70–cysteine 75, cysteine 123–cysteine 324, and cysteine 202–cysteine 234. Residue histidine 68 is the Proton acceptor of the active site. Aspartate 69, valine 72, glycine 74, aspartate 76, and serine 78 together coordinate Ca(2+). Proline 165 serves as a coordination point for substrate. Heme b is bound at residue histidine 195. Residue threonine 196 participates in Ca(2+) binding. A glycan (N-linked (GlcNAc...) asparagine) is linked at asparagine 213. The Ca(2+) site is built by serine 251 and aspartate 256.

The protein belongs to the peroxidase family. Classical plant (class III) peroxidase subfamily. Heme b is required as a cofactor. Ca(2+) serves as cofactor.

It is found in the secreted. It carries out the reaction 2 a phenolic donor + H2O2 = 2 a phenolic radical donor + 2 H2O. Its function is as follows. Removal of H(2)O(2), oxidation of toxic reductants, biosynthesis and degradation of lignin, suberization, auxin catabolism, response to environmental stresses such as wounding, pathogen attack and oxidative stress. These functions might be dependent on each isozyme/isoform in each plant tissue. This is Peroxidase 5 from Vitis vinifera (Grape).